We begin with the raw amino-acid sequence, 238 residues long: Protein TIFY 3A (238 aa).

One can recognise a Tify 1 domain in the interval 39–74; sequence EPDASTQLTIIFGGSCRVFNGVPAQKVQEIIRIAFA. The Jas 1 motif lies at 101–120; the sequence is PIARRRSLQRFLEKRRDRST. Residues 103 to 110 carry the Nuclear localization signal 1 motif; that stretch reads ARRRSLQR. Residues 125 to 160 enclose the Tify 2 domain; sequence SMILPSQLTIIFGGSFSVFDGIPAEKVQEILHIAAA. The Jas 2 motif lies at 197–222; sequence PIARRRSLQRFFEKRRHRFVHTKPYS. A Nuclear localization signal 2 motif is present at residues 199 to 206; the sequence is ARRRSLQR. The segment at 219-238 is disordered; the sequence is KPYSATTSEADKNETSPIVT.

It belongs to the TIFY/JAZ family. Interacts with MYC2, MYB21, MYB24, AFPH2/NINJA, TIFY10A/JAZ1, TIFY10B/JAZ2, TIFY6B/JAZ3, TIFY6A/JAZ4, TIFY7/JAZ9 and TIFY9/JAZ10. Ubiquitinated. Targeted for degradation by the SCF(COI1) E3 ubiquitin ligase-proteasome pathway during jasmonate signaling.

It localises to the nucleus. Its function is as follows. Repressor of jasmonate (JA) responses. Targets MYC2, MYC3 and MYC4 that are JA-dependent transcription activators. The chain is Protein TIFY 3A (TIFY3A) from Arabidopsis thaliana (Mouse-ear cress).